A 104-amino-acid chain; its full sequence is L-rhamnose mutarotase (104 aa).

Tyr-18 lines the substrate pocket. His-22 (proton donor) is an active-site residue. Substrate-binding positions include Tyr-41 and 76–77 (WW).

Belongs to the rhamnose mutarotase family. In terms of assembly, homodimer.

The protein resides in the cytoplasm. It catalyses the reaction alpha-L-rhamnose = beta-L-rhamnose. Its pathway is carbohydrate metabolism; L-rhamnose metabolism. Involved in the anomeric conversion of L-rhamnose. The polypeptide is L-rhamnose mutarotase (Escherichia coli O7:K1 (strain IAI39 / ExPEC)).